We begin with the raw amino-acid sequence, 481 residues long: SLVAVVITTFLYLIFRDSSPKGLPPGPKPWPIVGNLLQLGEKPHSQFAQLAETYGDLFSLKLGSETVVVASTPLAASEILKTHDRVLSGRYVFQSFRVKEHVENSIVWSECNETWKKLRKVCRTELFTQKMIESQAEVRESKAMEMVEYLKKNVGNEVKIAEVVFGTLVNIFGNLIFSQNIFKLGDESSGSVEMKEHLWRMLELGNSTNPADYFPFLGKFDLFGQSKDVADCLQGIYSVWGAMLKERKIAKQHNNSKKNDFVEILLDSGLDDQQINALLMEIFGAGTETSASTIEWALSELTKNPQVTANMRLELLSVVGKRPVKESDIPNMPYLQAFVKETLRLHPATPLLLPRRALETCKVLNYTIPKECQIMVNAWGIGRDPKRWTDPLKFSPERFLNSSIDFKGNDFELIPFGAGRRICPGVPLATQFISLIVSSLVQNFDWGFPKGMDPSQLIMEEKFGLTLQKEPPLYIVPKTRD.

Residue cysteine 423 coordinates heme.

This sequence belongs to the cytochrome P450 family. It depends on heme as a cofactor. Restricted to the parietal region of sieve elements adjacent or proximal to laticifers in roots, stems, leaves, carpels and hypocotyls.

The protein resides in the endoplasmic reticulum. The catalysed reaction is (S)-N-methylcoclaurine + reduced [NADPH--hemoprotein reductase] + O2 = (S)-3'-hydroxy-N-methylcoclaurine + oxidized [NADPH--hemoprotein reductase] + H2O + H(+). It participates in alkaloid biosynthesis; (S)-reticuline biosynthesis; (S)-reticuline from (S)-norcoclaurine: step 3/4. Cytochrome P450 monooxygenase involved in the biosynthesis of benzylisoquinoline alkaloids. Catalyzes the 3'-hydroxylation of (S)-N-methylcoclaurine. The protein is (S)-N-methylcoclaurine 3'-hydroxylase isozyme 1 of Papaver somniferum (Opium poppy).